The chain runs to 502 residues: Nondiscriminating glutamyl-tRNA synthetase EARS2, mitochondrial (502 aa).

The transit peptide at methionine 1–phenylalanine 20 directs the protein to the mitochondrion. Residue arginine 19–glycine 21 participates in L-glutamate binding. The short motif at proline 24–glycine 32 is the 'HIGH' region element. Histidine 29 lines the ATP pocket. L-glutamate is bound by residues glutamate 55, tyrosine 207–asparagine 211, and arginine 225. ATP-binding positions include glutamate 228 and lysine 263 to arginine 267. The short motif at lysine 263–arginine 267 is the 'KMSKS' region element.

The protein belongs to the class-I aminoacyl-tRNA synthetase family. Glutamate--tRNA ligase type 1 subfamily.

It localises to the mitochondrion matrix. It carries out the reaction tRNA(Glx) + L-glutamate + ATP = L-glutamyl-tRNA(Glx) + AMP + diphosphate. The catalysed reaction is tRNA(Glu) + L-glutamate + ATP = L-glutamyl-tRNA(Glu) + AMP + diphosphate. The enzyme catalyses tRNA(Gln) + L-glutamate + ATP = L-glutamyl-tRNA(Gln) + AMP + diphosphate. Non-discriminating glutamyl-tRNA synthetase that catalyzes aminoacylation of both mitochondrial tRNA(Glu) and tRNA(Gln) and participates in RNA aminoacylation for mitochondrial protein translation. Attachs glutamate to tRNA(Glu) or tRNA(Gln) in a two-step reaction: glutamate is first activated by ATP to form Glu-AMP and then transferred to the acceptor end of tRNA(Glu) or tRNA(Gln). The protein is Nondiscriminating glutamyl-tRNA synthetase EARS2, mitochondrial of Gallus gallus (Chicken).